The following is a 120-amino-acid chain: U-scoloptoxin(20)-Cw1a (120 aa).

An N-terminal signal peptide occupies residues 1-26 (MNSTDRLLGVLLAVVALILLIRISEA). The interval 87–106 (SSGKSLTTTKDSSESRKKEI) is disordered. Over residues 97–106 (DSSESRKKEI) the composition is skewed to basic and acidic residues.

Belongs to the scoloptoxin-20 family. Contains 3 disulfide bonds. Expressed by the venom gland.

Its subcellular location is the secreted. This is U-scoloptoxin(20)-Cw1a from Cormocephalus westwoodi (Westwood's green centipede).